Consider the following 312-residue polypeptide: tRNA dimethylallyltransferase (312 aa).

15-22 is an ATP binding site; the sequence is GPTAAGKS. Substrate is bound at residue 17–22; the sequence is TAAGKS. The tract at residues 40–43 is interaction with substrate tRNA; sequence DSMQ.

Belongs to the IPP transferase family. Monomer. Requires Mg(2+) as cofactor.

The catalysed reaction is adenosine(37) in tRNA + dimethylallyl diphosphate = N(6)-dimethylallyladenosine(37) in tRNA + diphosphate. Functionally, catalyzes the transfer of a dimethylallyl group onto the adenine at position 37 in tRNAs that read codons beginning with uridine, leading to the formation of N6-(dimethylallyl)adenosine (i(6)A). The polypeptide is tRNA dimethylallyltransferase (Streptomyces coelicolor (strain ATCC BAA-471 / A3(2) / M145)).